Here is an 82-residue protein sequence, read N- to C-terminus: Small ribosomal subunit protein bS16 (82 aa).

Belongs to the bacterial ribosomal protein bS16 family.

The polypeptide is Small ribosomal subunit protein bS16 (Vibrio cholerae serotype O1 (strain ATCC 39541 / Classical Ogawa 395 / O395)).